A 189-amino-acid chain; its full sequence is Protein GrpE (189 aa).

A disordered region spans residues 1–24; sequence MADEQNLDTQNPEAQAAENAAPSD. Over residues 10–24 the composition is skewed to low complexity; it reads QNPEAQAAENAAPSD.

This sequence belongs to the GrpE family. As to quaternary structure, homodimer.

It localises to the cytoplasm. Functionally, participates actively in the response to hyperosmotic and heat shock by preventing the aggregation of stress-denatured proteins, in association with DnaK and GrpE. It is the nucleotide exchange factor for DnaK and may function as a thermosensor. Unfolded proteins bind initially to DnaJ; upon interaction with the DnaJ-bound protein, DnaK hydrolyzes its bound ATP, resulting in the formation of a stable complex. GrpE releases ADP from DnaK; ATP binding to DnaK triggers the release of the substrate protein, thus completing the reaction cycle. Several rounds of ATP-dependent interactions between DnaJ, DnaK and GrpE are required for fully efficient folding. This chain is Protein GrpE, found in Ectopseudomonas mendocina (strain ymp) (Pseudomonas mendocina).